The sequence spans 201 residues: MELVITGSNNKVSVSEAVFGREFSEDLVHQVVVAYRNAGRAGTKAQKTRSEVAGTTKKSKKQKGGGARHGALTAPIFVGGGVTFAAKPRSFEQKVNRKMYRAAICAIFSELNRQGRLMIVDAFDLEATKTKDLIEKLKGLDVGKRPLIVTEEASEHLYLSARNLPYVQVRDVQGLDPVALVGADTVVITADAVKKVEEWLA.

Residues 44 to 68 (KAQKTRSEVAGTTKKSKKQKGGGAR) are disordered.

It belongs to the universal ribosomal protein uL4 family. As to quaternary structure, part of the 50S ribosomal subunit.

Its function is as follows. One of the primary rRNA binding proteins, this protein initially binds near the 5'-end of the 23S rRNA. It is important during the early stages of 50S assembly. It makes multiple contacts with different domains of the 23S rRNA in the assembled 50S subunit and ribosome. Functionally, forms part of the polypeptide exit tunnel. The chain is Large ribosomal subunit protein uL4 from Xanthomonas oryzae pv. oryzae (strain MAFF 311018).